A 907-amino-acid polypeptide reads, in one-letter code: Avirulence protein A (907 aa).

Composition is skewed to polar residues over residues 1 to 11 (MWNVSKSSNNL) and 124 to 136 (AGSN…SSDP). Disordered regions lie at residues 1 to 47 (MWNV…HDQL) and 116 to 157 (NDDF…KKSY).

The chain is Avirulence protein A (avrA) from Pseudomonas savastanoi pv. glycinea (Pseudomonas syringae pv. glycinea).